The sequence spans 1651 residues: A.superbus venom factor 2 (1651 aa).

The first 22 residues, methionine 1–glycine 22, serve as a signal peptide directing secretion. Asparagine 189 is a glycosylation site (N-linked (GlcNAc...) asparagine). Mg(2+) contacts are provided by proline 519, aspartate 542, valine 543, and aspartate 545. 12 disulfides stabilise this stretch: cysteine 547–cysteine 808, cysteine 616–cysteine 651, cysteine 684–cysteine 711, cysteine 685–cysteine 718, cysteine 698–cysteine 719, cysteine 864–cysteine 1501, cysteine 1346–cysteine 1477, cysteine 1377–cysteine 1446, cysteine 1494–cysteine 1499, cysteine 1506–cysteine 1578, cysteine 1525–cysteine 1649, and cysteine 1625–cysteine 1634. Positions arginine 657–arginine 739 are excised as a propeptide. The segment at serine 661 to arginine 739 is C3a-like domain. The Anaphylatoxin-like domain occupies cysteine 684–cysteine 719. The factor B binding site stretch occupies residues glutamate 743 to serine 754. Positions histidine 992 to tyrosine 1269 are excised as a propeptide. A C3d-like domain region spans residues histidine 992–tyrosine 1269. Residues valine 1197–threonine 1259 are factor H binding site. N-linked (GlcNAc...) asparagine glycosylation is found at asparagine 1282 and asparagine 1352. The NTR domain occupies cysteine 1506–cysteine 1649.

Belongs to the venom complement C3 homolog family. In terms of assembly, heterotrimer of alpha, beta and gamma chains; disulfide-linked. Is active with factor B in the presence of factor D. In terms of processing, first processed by the removal of 4 Arg residues by furin-type protease, forming two chains, alpha and gamma/beta precursor, linked by a disulfide bond. This mature AVF is composed of three chains: alpha, gamma and beta. Expressed by the venom gland.

The protein localises to the secreted. Functionally, complement-activating protein in snake venom. It is a structural and functional analog of complement component C3b, the activated form of C3. It binds factor B (CFB), which is subsequently cleaved by factor D (CFD) to form the bimolecular complex AVF/Bb. AVF/Bb is a C3 convertase that cleaves complement component C3, but not C5 (as do CVF/Bb). The sequence is that of A.superbus venom factor 2 from Austrelaps superbus (Lowland copperhead snake).